Here is a 447-residue protein sequence, read N- to C-terminus: uncharacterized protein (447 aa).

The protein resides in the mitochondrion. This is an uncharacterized protein from Dictyostelium discoideum (Social amoeba).